Reading from the N-terminus, the 4246-residue chain is Intermembrane lipid transfer protein vps13F (4246 aa).

In terms of domain architecture, Chorein N-terminal spans 2-113 (FESIVSNLLT…LLLQKKLKKL (112 aa)). 16 disordered regions span residues 141–271 (IKEK…EDED), 401–420 (PKKS…PPPK), 591–759 (KAED…SILG), 914–944 (VSSS…EKKL), 964–1014 (KKSK…TNDE), 1217–1251 (QAQQ…IKSP), 1356–1379 (ISTH…DRVD), 1395–1436 (YNGV…KSKK), 1622–1683 (REKR…KSQS), 2101–2131 (LESL…QQQQ), 2211–2237 (HHSK…EKEK), 2471–2513 (QQQH…KSKQ), 2704–2756 (LSTS…QTTK), 3421–3449 (IDDD…TSPL), 3611–3652 (KTLN…NNQN), and 3794–3813 (NNNN…NIDE). A compositionally biased stretch (low complexity) spans 168–201 (NASPVNSNNNNNNNSNLVSESNIPSSSSSSSSSL). A compositionally biased stretch (basic and acidic residues) spans 207–217 (NSSKDANKSDD). Over residues 218–271 (TDMDVDDDDEFQEATEGDYDNEEEQDDHDEEDDLSDDDDDDDDEEDDYEMEDED) the composition is skewed to acidic residues. 2 stretches are compositionally biased toward low complexity: residues 401 to 413 (PKKS…TTTP) and 597 to 658 (QQQQ…SNST). The span at 659-668 (DSKDIMKSSG) shows a compositional bias: basic and acidic residues. Over residues 669–680 (DKNVNNNNNMGD) the composition is skewed to low complexity. Residues 681-702 (NENKDNIDKKEENKNDDQDNKN) are compositionally biased toward basic and acidic residues. Low complexity-rich tracts occupy residues 725-747 (SGGW…QQQQ) and 914-924 (VSSSPSPVSSP). 2 stretches are compositionally biased toward basic and acidic residues: residues 925–944 (SRDK…EKKL) and 987–1001 (DKYS…REES). The span at 1217–1241 (QAQQQAQQQQQSQHPSSNDDNSSSN) shows a compositional bias: low complexity. The segment covering 1400–1409 (SDDDNNDDEN) has biased composition (acidic residues). Basic and acidic residues-rich tracts occupy residues 1410–1431 (DKTT…DSLK) and 1622–1634 (REKR…DKDN). A compositionally biased stretch (low complexity) spans 1644–1670 (QQSIPQKQQQQQQQQQQQQQQQQQQQQ). Composition is skewed to low complexity over residues 2471–2506 (QQQH…NNNN), 2705–2755 (STST…TQTT), 3430–3449 (DSGS…TSPL), 3613–3652 (LNNN…NNQN), and 3794–3809 (NNNN…NDFN).

Belongs to the VPS13 family.

Its subcellular location is the membrane. Its function is as follows. Mediates the transfer of lipids between membranes at organelle contact sites. This Dictyostelium discoideum (Social amoeba) protein is Intermembrane lipid transfer protein vps13F (vps13F).